Consider the following 144-residue polypeptide: Large ribosomal subunit protein uL15 (144 aa).

The disordered stretch occupies residues 1–54; that stretch reads MRLNTLSPAPGRVSAKKRVGRGIGSGLGKTAGRGHKGLKSRSGGSVKPGFEGGQ. A compositionally biased stretch (gly residues) spans 21-31; that stretch reads RGIGSGLGKTA.

It belongs to the universal ribosomal protein uL15 family. Part of the 50S ribosomal subunit.

In terms of biological role, binds to the 23S rRNA. The protein is Large ribosomal subunit protein uL15 of Saccharophagus degradans (strain 2-40 / ATCC 43961 / DSM 17024).